The sequence spans 787 residues: Protein translocase subunit SecA 2 (787 aa).

ATP-binding positions include glutamine 86, 104–108, and aspartate 493; that span reads GEGKT.

It belongs to the SecA family. As to quaternary structure, monomer and homodimer. Part of the essential Sec protein translocation apparatus which comprises SecA, SecYEG and auxiliary proteins SecDF. Other proteins may also be involved.

Its subcellular location is the cell membrane. It localises to the cytoplasm. The catalysed reaction is ATP + H2O + cellular proteinSide 1 = ADP + phosphate + cellular proteinSide 2.. Part of the Sec protein translocase complex. Interacts with the SecYEG preprotein conducting channel. Has a central role in coupling the hydrolysis of ATP to the transfer of proteins into and across the cell membrane, serving as an ATP-driven molecular motor driving the stepwise translocation of polypeptide chains across the membrane. The chain is Protein translocase subunit SecA 2 from Bacillus thuringiensis subsp. konkukian (strain 97-27).